The sequence spans 351 residues: Prostaglandin reductase 2 (351 aa).

99-100 (FY) serves as a coordination point for substrate. NADP(+) contacts are provided by residues 165–168 (GACG), Lys192, Tyr208, Asn231, 253–259 (CGQISQY), 287–289 (FMV), and Asn337. 288 to 290 (MVL) is a substrate binding site.

The protein belongs to the NADP-dependent oxidoreductase L4BD family. In terms of assembly, monomer.

It is found in the cytoplasm. It carries out the reaction 13,14-dihydro-15-oxo-prostaglandin E2 + NAD(+) = 15-oxoprostaglandin E2 + NADH + H(+). It catalyses the reaction 13,14-dihydro-15-oxo-prostaglandin E2 + NADP(+) = 15-oxoprostaglandin E2 + NADPH + H(+). The enzyme catalyses 13,14-dihydro-15-oxo-PGF2alpha + NADP(+) = 15-oxoprostaglandin F2alpha + NADPH + H(+). The catalysed reaction is 13,14-dihydro-15-oxo-prostaglandin E1 + NADP(+) = 15-oxoprostaglandin E1 + NADPH + H(+). It carries out the reaction 13,14-dihydro-15-oxo-prostaglandin F1alpha + NADP(+) = 15-oxoprostaglandin F1alpha + NADPH + H(+). Its function is as follows. Functions as 15-oxo-prostaglandin 13-reductase and acts on 15-keto-PGE1, 15-keto-PGE2, 15-keto-PGE1-alpha and 15-keto-PGE2-alpha with highest activity towards 15-keto-PGE2. Overexpression represses transcriptional activity of PPARG and inhibits adipocyte differentiation. This is Prostaglandin reductase 2 from Rattus norvegicus (Rat).